The primary structure comprises 26 residues: Delta-hemolysin (26 aa).

At Met1 the chain carries N-formylmethionine.

The protein belongs to the delta-lysin family.

Its subcellular location is the secreted. The protein localises to the host cell membrane. Its function is as follows. Lyses erythrocytes and many other mammalian cells. The polypeptide is Delta-hemolysin (hld) (Staphylococcus aureus (strain MSSA476)).